Reading from the N-terminus, the 365-residue chain is UDP-N-acetylglucosamine--N-acetylmuramyl-(pentapeptide) pyrophosphoryl-undecaprenol N-acetylglucosamine transferase (365 aa).

Residues 17–19, Asn-129, Arg-167, Ser-194, Ile-250, 269–274, and Gln-295 each bind UDP-N-acetyl-alpha-D-glucosamine; these read TGG and ALTVSE.

The protein belongs to the glycosyltransferase 28 family. MurG subfamily.

It is found in the cell inner membrane. The enzyme catalyses di-trans,octa-cis-undecaprenyl diphospho-N-acetyl-alpha-D-muramoyl-L-alanyl-D-glutamyl-meso-2,6-diaminopimeloyl-D-alanyl-D-alanine + UDP-N-acetyl-alpha-D-glucosamine = di-trans,octa-cis-undecaprenyl diphospho-[N-acetyl-alpha-D-glucosaminyl-(1-&gt;4)]-N-acetyl-alpha-D-muramoyl-L-alanyl-D-glutamyl-meso-2,6-diaminopimeloyl-D-alanyl-D-alanine + UDP + H(+). It participates in cell wall biogenesis; peptidoglycan biosynthesis. In terms of biological role, cell wall formation. Catalyzes the transfer of a GlcNAc subunit on undecaprenyl-pyrophosphoryl-MurNAc-pentapeptide (lipid intermediate I) to form undecaprenyl-pyrophosphoryl-MurNAc-(pentapeptide)GlcNAc (lipid intermediate II). This Shewanella violacea (strain JCM 10179 / CIP 106290 / LMG 19151 / DSS12) protein is UDP-N-acetylglucosamine--N-acetylmuramyl-(pentapeptide) pyrophosphoryl-undecaprenol N-acetylglucosamine transferase.